The chain runs to 143 residues: Ribulose bisphosphate carboxylase large chain (143 aa).

The propeptide occupies 1-2 (MS). Position 3 is an N-acetylproline (proline 3). Position 14 is an N6,N6,N6-trimethyllysine (lysine 14). Residue 123 lines the substrate pocket.

The protein belongs to the RuBisCO large chain family. Type I subfamily. Heterohexadecamer of 8 large chains and 8 small chains.

It is found in the plastid. Its subcellular location is the chloroplast. It carries out the reaction 2 (2R)-3-phosphoglycerate + 2 H(+) = D-ribulose 1,5-bisphosphate + CO2 + H2O. The catalysed reaction is D-ribulose 1,5-bisphosphate + O2 = 2-phosphoglycolate + (2R)-3-phosphoglycerate + 2 H(+). Its function is as follows. RuBisCO catalyzes two reactions: the carboxylation of D-ribulose 1,5-bisphosphate, the primary event in carbon dioxide fixation, as well as the oxidative fragmentation of the pentose substrate in the photorespiration process. Both reactions occur simultaneously and in competition at the same active site. In Nemopanthus mucronatus (Catberry), this protein is Ribulose bisphosphate carboxylase large chain (rbcL).